Reading from the N-terminus, the 431-residue chain is MSKIVKVIGREIIDSRGNPTVEAEVHLEGGFVGLAAAPSGASTGSREALELRDGDKSRFLGKGVLKAVAAVNGPIAQAVIGKDAKDQANIDKIMIDLDGTENKSQFGANAILAVSLAAAKAAAASKGMPLYEHIAELNGTPGKFSMPLPMMNIINGGEHADNNVDIQEFMIQPVGAKTLKEAVRIGSEVFHHLAKVLKAKGLNTAVGDEGGYAPNLGSNAEALAVIAEAVKAAGYELGKDITLAMDCAASEFYKDGKYVLAGEGNKAFTSEEFTHFLEDLTKQYPIVSIEDGLDESDWAGFKYQTEVLGDKIQLVGDDLFVTNTKILKEGIEKGVANSILIKFNQIGSLTETLAAIKMAKDAGYTAVISHRSGETEDATIADLAVGTAAGQIKTGSMSRSDRVAKYNQLIRIEEALGDRAPFNGLKEVKGQ.

Glutamine 167 is a (2R)-2-phosphoglycerate binding site. Residue glutamate 209 is the Proton donor of the active site. 3 residues coordinate Mg(2+): aspartate 246, glutamate 290, and aspartate 317. 4 residues coordinate (2R)-2-phosphoglycerate: lysine 342, arginine 371, serine 372, and lysine 393. The active-site Proton acceptor is lysine 342.

Belongs to the enolase family. In terms of assembly, component of the RNA degradosome, a multiprotein complex involved in RNA processing and mRNA degradation. The cofactor is Mg(2+).

It is found in the cytoplasm. The protein resides in the secreted. The protein localises to the cell surface. It catalyses the reaction (2R)-2-phosphoglycerate = phosphoenolpyruvate + H2O. Its pathway is carbohydrate degradation; glycolysis; pyruvate from D-glyceraldehyde 3-phosphate: step 4/5. Its function is as follows. Catalyzes the reversible conversion of 2-phosphoglycerate (2-PG) into phosphoenolpyruvate (PEP). It is essential for the degradation of carbohydrates via glycolysis. The chain is Enolase from Yersinia pestis bv. Antiqua (strain Antiqua).